The following is a 122-amino-acid chain: Large ribosomal subunit protein uL14 (122 aa).

The protein belongs to the universal ribosomal protein uL14 family. As to quaternary structure, part of the 50S ribosomal subunit. Forms a cluster with proteins L3 and L19. In the 70S ribosome, L14 and L19 interact and together make contacts with the 16S rRNA in bridges B5 and B8.

Its function is as follows. Binds to 23S rRNA. Forms part of two intersubunit bridges in the 70S ribosome. The chain is Large ribosomal subunit protein uL14 from Kocuria rhizophila (strain ATCC 9341 / DSM 348 / NBRC 103217 / DC2201).